Here is a 714-residue protein sequence, read N- to C-terminus: Fatty acid oxidation complex subunit alpha (714 aa).

The interval 1-190 (MEMASAFTLN…KLGLVDDVVP (190 aa)) is enoyl-CoA hydratase. A 3-hydroxyacyl-CoA dehydrogenase region spans residues 306–714 (APLNSVGILG…FWKTTATDLQ (409 aa)).

It in the N-terminal section; belongs to the enoyl-CoA hydratase/isomerase family. The protein in the central section; belongs to the 3-hydroxyacyl-CoA dehydrogenase family. As to quaternary structure, heterotetramer of two alpha chains (FadJ) and two beta chains (FadI).

Its subcellular location is the cytoplasm. It catalyses the reaction a (3S)-3-hydroxyacyl-CoA = a (2E)-enoyl-CoA + H2O. The catalysed reaction is a 4-saturated-(3S)-3-hydroxyacyl-CoA = a (3E)-enoyl-CoA + H2O. The enzyme catalyses a (3S)-3-hydroxyacyl-CoA + NAD(+) = a 3-oxoacyl-CoA + NADH + H(+). It carries out the reaction (3S)-3-hydroxybutanoyl-CoA = (3R)-3-hydroxybutanoyl-CoA. Its pathway is lipid metabolism; fatty acid beta-oxidation. Functionally, catalyzes the formation of a hydroxyacyl-CoA by addition of water on enoyl-CoA. Also exhibits 3-hydroxyacyl-CoA epimerase and 3-hydroxyacyl-CoA dehydrogenase activities. The polypeptide is Fatty acid oxidation complex subunit alpha (Escherichia coli O81 (strain ED1a)).